Reading from the N-terminus, the 118-residue chain is Beta-defensin 126 (118 aa).

The signal sequence occupies residues Met1–Gly20. The interval Ser21–Asp63 is in vitro binds to LPS, mediates antimicrobial activity and inhibits LPS-mediated inflammation. Disulfide bonds link Cys27–Cys58, Cys34–Cys52, and Cys38–Cys59.

This sequence belongs to the beta-defensin family. Homodimer or homooligomer; disulfide-linked. Post-translationally, O-glycosylated; glycans contain alpha(2,3)-linked sialic acids.

It is found in the secreted. In terms of biological role, highly glycosylated atypical beta-defensin involved in several aspects of sperm function. Facilitates sperm transport in the female reproductive tract and contributes to sperm protection against immunodetection; both functions are probably implicating the negative surface charge provided by its O-linked oligosaccharides in the sperm glycocalyx. Involved in binding of sperm to oviductal epithelial cells to form a sperm reservoir until ovulation. Release from the sperm surface during capacitation and ovaluation by an elevation of oviductal fluid pH is unmasking other surface components and allows sperm to penetrate the cumulus matrix and bind to the zona pellucida of the oocyte. In vitro has antimicrobial activity and may inhibit LPS-mediated inflammation. This Pongo pygmaeus (Bornean orangutan) protein is Beta-defensin 126 (DEFB126).